A 118-amino-acid polypeptide reads, in one-letter code: MNKLAFSRELRLLTPEHYKKVFQQAHRAGSPHLTILARPNDLNHPRLGLAVPKKQIKTAPGRNHFKRIVRESFRLKQHDLPANDFVVIAKKSASELSNEELFKLLDKLWHRLSRLSRG.

Belongs to the RnpA family. In terms of assembly, consists of a catalytic RNA component (M1 or rnpB) and a protein subunit.

The enzyme catalyses Endonucleolytic cleavage of RNA, removing 5'-extranucleotides from tRNA precursor.. In terms of biological role, RNaseP catalyzes the removal of the 5'-leader sequence from pre-tRNA to produce the mature 5'-terminus. It can also cleave other RNA substrates such as 4.5S RNA. The protein component plays an auxiliary but essential role in vivo by binding to the 5'-leader sequence and broadening the substrate specificity of the ribozyme. The sequence is that of Ribonuclease P protein component from Photobacterium profundum (strain SS9).